Reading from the N-terminus, the 89-residue chain is Protein YihD (89 aa).

To H.influenzae HI_0845.

In Escherichia coli O157:H7, this protein is Protein YihD (yihD).